The chain runs to 360 residues: Ferredoxin--NADP reductase (360 aa).

The FAD site is built by Thr-25, Glu-44, Gln-52, Tyr-57, Val-97, Phe-132, Asp-298, and Ser-339.

Belongs to the ferredoxin--NADP reductase type 2 family. As to quaternary structure, homodimer. The cofactor is FAD.

The enzyme catalyses 2 reduced [2Fe-2S]-[ferredoxin] + NADP(+) + H(+) = 2 oxidized [2Fe-2S]-[ferredoxin] + NADPH. This chain is Ferredoxin--NADP reductase, found in Chlorobaculum tepidum (strain ATCC 49652 / DSM 12025 / NBRC 103806 / TLS) (Chlorobium tepidum).